Reading from the N-terminus, the 455-residue chain is P2X purinoceptor 5 (455 aa).

At Met-1–Arg-34 the chain is on the cytoplasmic side. A helical membrane pass occupies residues Val-35–Tyr-55. Residues Gln-56 to Gly-341 lie on the Extracellular side of the membrane. Residues Lys-69 and Lys-71 each contribute to the ATP site. A glycan (N-linked (GlcNAc...) asparagine) is linked at Asn-77. 3 disulfide bridges follow: Cys-118-Cys-169, Cys-129-Cys-152, and Cys-135-Cys-163. N-linked (GlcNAc...) asparagine glycosylation is present at Asn-157. An ATP-binding site is contributed by Thr-189. Asn-202 carries N-linked (GlcNAc...) asparagine glycosylation. Cystine bridges form between Cys-220-Cys-229 and Cys-263-Cys-272. Residues Asn-294, Arg-296, and Lys-314 each contribute to the ATP site. The chain crosses the membrane as a helical span at residues Ser-342 to Ile-362. Over Arg-363–Thr-455 the chain is Cytoplasmic. A compositionally biased stretch (acidic residues) spans Asn-384 to Pro-401. The tract at residues Asn-384 to Asn-422 is disordered. Residues Gln-412–Asn-422 are compositionally biased toward polar residues.

Belongs to the P2X receptor family. In terms of assembly, functional P2XRs are organized as homomeric and heteromeric trimers. Homotrimer. Forms heterotrimer with P2RX1. As to expression, predominantly expressed in heart but are also present in brain, spinal cord and adrenal gland.

Its subcellular location is the cell membrane. It catalyses the reaction Na(+)(in) = Na(+)(out). The enzyme catalyses Ca(2+)(in) = Ca(2+)(out). It carries out the reaction chloride(in) = chloride(out). Its activity is regulated as follows. Activated by ATP. Slowly desensitizing. Not activated by ATP agonist alpha/beta-methylene-ATP. Highly sensitive to the antagonists suramin and PPADS. Its function is as follows. ATP-gated nonselective transmembrane cation channel. Permeable to potassium, sodium and calcium. Unlike other P2RX receptors, the P2X5 receptor is also permeable to chloride. Acts as an important regulator of inflammatory-related bone loss and osteoclast multinucleation. The chain is P2X purinoceptor 5 (P2rx5) from Rattus norvegicus (Rat).